Here is a 151-residue protein sequence, read N- to C-terminus: UPF0178 protein amb2838 (151 aa).

It belongs to the UPF0178 family.

The protein is UPF0178 protein amb2838 of Paramagnetospirillum magneticum (strain ATCC 700264 / AMB-1) (Magnetospirillum magneticum).